A 124-amino-acid chain; its full sequence is Small ribosomal subunit protein bS6 (124 aa).

The interval 96–124 (ETGPSPMMKEVQREEAKKSAATQPSEAQA) is disordered. Positions 115–124 (AATQPSEAQA) are enriched in polar residues.

The protein belongs to the bacterial ribosomal protein bS6 family.

Its function is as follows. Binds together with bS18 to 16S ribosomal RNA. This is Small ribosomal subunit protein bS6 from Paraburkholderia phytofirmans (strain DSM 17436 / LMG 22146 / PsJN) (Burkholderia phytofirmans).